A 486-amino-acid polypeptide reads, in one-letter code: MTFTIQHFIALLPLLITSATLVVVMLAVAWKRNHSFTATLSVIGLNLALLSLLPVLGVTPIEVTPLVLVDNYACFYMALVLVSALACVTLAHAYMESYPGNREELYLLLLLATAGGLVLVSAQHLASLFIGLELLSVPVYGMVAYAFFNKRSLEAGIKYTVLSAAGSAFLLFGMALLYAESGTLGFAGLGAKVAEHVLSGPLVSVGVGMMLVGLGFKLSLVPFHLWTPDVYEGAPAPVSAFLATASKVAVFAVLLRLFQIAPAALDNQLLNISLSVIAVASILFGNLLALTQSNIKRLLGYSSIAHLGYLLVALIASKGMAVEAVGVYLATYVLTSLGAFGVITLMSTPYSGRDADALFEYRGLFWRRPVLTAVMTVMMLSLAGIPLTAGFIGKFYVIAVGVESHLWWLIGALVLGSAIGLYYYLRVMVTLFLVEPGIRQHDAPFNWGQRAGGIMLVAIALLAFFLGVYPQPLLEILQHSGLALAG.

A run of 14 helical transmembrane segments spans residues 8–28 (FIAL…MLAV), 38–58 (ATLS…VLGV), 73–93 (ACFY…LAHA), 105–125 (LYLL…AQHL), 128–148 (LFIG…YAFF), 169–189 (FLLF…FAGL), 196–216 (HVLS…GLGF), 235–255 (PAPV…AVLL), 269–289 (LLNI…NLLA), 304–324 (IAHL…AVEA), 325–345 (VGVY…VITL), 373–393 (AVMT…GFIG), 405–427 (HLWW…YLRV), and 454–474 (IMLV…QPLL).

This sequence belongs to the complex I subunit 2 family. NDH-1 is composed of 13 different subunits. Subunits NuoA, H, J, K, L, M, N constitute the membrane sector of the complex.

The protein resides in the cell inner membrane. It carries out the reaction a quinone + NADH + 5 H(+)(in) = a quinol + NAD(+) + 4 H(+)(out). In terms of biological role, NDH-1 shuttles electrons from NADH, via FMN and iron-sulfur (Fe-S) centers, to quinones in the respiratory chain. The immediate electron acceptor for the enzyme in this species is believed to be ubiquinone. Couples the redox reaction to proton translocation (for every two electrons transferred, four hydrogen ions are translocated across the cytoplasmic membrane), and thus conserves the redox energy in a proton gradient. This Pseudomonas aeruginosa (strain ATCC 15692 / DSM 22644 / CIP 104116 / JCM 14847 / LMG 12228 / 1C / PRS 101 / PAO1) protein is NADH-quinone oxidoreductase subunit N.